Here is a 185-residue protein sequence, read N- to C-terminus: Threonylcarbamoyl-AMP synthase (185 aa).

One can recognise a YrdC-like domain in the interval 4–185 (SWRVQQAARE…LATGNIVRPA (182 aa)).

This sequence belongs to the SUA5 family. TsaC subfamily.

It localises to the cytoplasm. The catalysed reaction is L-threonine + hydrogencarbonate + ATP = L-threonylcarbamoyladenylate + diphosphate + H2O. Its function is as follows. Required for the formation of a threonylcarbamoyl group on adenosine at position 37 (t(6)A37) in tRNAs that read codons beginning with adenine. Catalyzes the conversion of L-threonine, HCO(3)(-)/CO(2) and ATP to give threonylcarbamoyl-AMP (TC-AMP) as the acyladenylate intermediate, with the release of diphosphate. This is Threonylcarbamoyl-AMP synthase from Pseudomonas fluorescens (strain Pf0-1).